Here is a 347-residue protein sequence, read N- to C-terminus: 4-hydroxy-2-oxovalerate aldolase 4 (347 aa).

The Pyruvate carboxyltransferase domain maps to 9-259 (ITIVDTTLRD…DTGVDLFPLI (251 aa)). Substrate contacts are provided by residues 17–18 (RD), S171, and H198. Residue D18 participates in Mn(2+) binding. Mn(2+) is bound by residues H198 and H200. Y289 serves as a coordination point for substrate.

This sequence belongs to the 4-hydroxy-2-oxovalerate aldolase family.

It carries out the reaction (S)-4-hydroxy-2-oxopentanoate = acetaldehyde + pyruvate. The protein is 4-hydroxy-2-oxovalerate aldolase 4 of Rhodococcus opacus (strain B4).